The following is a 329-amino-acid chain: MHITIIGGGAWGATLAQVLTDNNHQVLVYDLNKNYINRINQGMHSIFDLPLKNIQSTSDLEISLLYSDLLVLAVPTKAMRQVLQQIALLSKTPKSFVNVSKGIEPSTFFRVSQIVNQIIPPSLLQNYASLMGPSHAEEVILRKVTLLTAASSDLSFATEIQKIFSNPIYLKIYTSSDLVGNEVCSALKNVLALINGILVAKGFGINSQAALISRGIVEMSRLVTFYHGSFKTVLGLPGLGDLIVTAFSTHSRNFSAGQKIGAGKTYEQIMSESDQVIEGFQSLVAFYQLQSKHQLDLPLIKAAYQLIYECRPFELVFDELMQRPFKSDC.

Residues tryptophan 11 and lysine 101 each coordinate NADPH. 3 residues coordinate sn-glycerol 3-phosphate: lysine 101, glycine 132, and serine 134. Alanine 136 contributes to the NADPH binding site. Residues lysine 188, aspartate 241, serine 251, arginine 252, and asparagine 253 each coordinate sn-glycerol 3-phosphate. The active-site Proton acceptor is the lysine 188. Residue arginine 252 participates in NADPH binding. Residues valine 276 and glutamate 278 each contribute to the NADPH site.

This sequence belongs to the NAD-dependent glycerol-3-phosphate dehydrogenase family.

Its subcellular location is the cytoplasm. The catalysed reaction is sn-glycerol 3-phosphate + NAD(+) = dihydroxyacetone phosphate + NADH + H(+). It carries out the reaction sn-glycerol 3-phosphate + NADP(+) = dihydroxyacetone phosphate + NADPH + H(+). It functions in the pathway membrane lipid metabolism; glycerophospholipid metabolism. Functionally, catalyzes the reduction of the glycolytic intermediate dihydroxyacetone phosphate (DHAP) to sn-glycerol 3-phosphate (G3P), the key precursor for phospholipid synthesis. This chain is Glycerol-3-phosphate dehydrogenase [NAD(P)+], found in Phytoplasma australiense.